Reading from the N-terminus, the 137-residue chain is Ubiquitin-conjugating enzyme variant MMS2 (137 aa).

The UBC core domain maps to 5-137 (PRNFRLLEEL…LRQPKEGETF (133 aa)). The residue at position 71 (Ser-71) is a Phosphoserine.

The protein belongs to the ubiquitin-conjugating enzyme family. As to quaternary structure, heterodimer with UBC13.

Functionally, has a role in the DNA error-free postreplication repair (PRR) pathway. Lacks catalytic activity by itself. The UBC13/MMS2 heterodimer catalyzes the synthesis of non-canonical poly-ubiquitin chains that are linked through 'Lys-63'. This Saccharomyces cerevisiae (strain ATCC 204508 / S288c) (Baker's yeast) protein is Ubiquitin-conjugating enzyme variant MMS2 (MMS2).